Consider the following 125-residue polypeptide: Protein MGF 110-3L (125 aa).

Residues 1–6 (MLVIFL) are Cytoplasmic-facing. Residues 7 to 27 (GILGLLANQVFGLPAKNAGHL) traverse the membrane as a helical segment. The Extracellular portion of the chain corresponds to 28–116 (YSTENPPEEE…VPHNRPHRLG (89 aa)). Residue Asn-64 is glycosylated (N-linked (GlcNAc...) asparagine; by host).

The protein belongs to the asfivirus MGF 110 family.

The protein resides in the host membrane. In terms of biological role, plays a role in virus cell tropism, and may be required for efficient virus replication in macrophages. The polypeptide is Protein MGF 110-3L (African swine fever virus (isolate Pig/Kenya/KEN-50/1950) (ASFV)).